Here is a 201-residue protein sequence, read N- to C-terminus: 3-isopropylmalate dehydratase small subunit (201 aa).

The protein belongs to the LeuD family. LeuD type 1 subfamily. As to quaternary structure, heterodimer of LeuC and LeuD.

The catalysed reaction is (2R,3S)-3-isopropylmalate = (2S)-2-isopropylmalate. It participates in amino-acid biosynthesis; L-leucine biosynthesis; L-leucine from 3-methyl-2-oxobutanoate: step 2/4. Its function is as follows. Catalyzes the isomerization between 2-isopropylmalate and 3-isopropylmalate, via the formation of 2-isopropylmaleate. This is 3-isopropylmalate dehydratase small subunit from Shewanella putrefaciens (strain CN-32 / ATCC BAA-453).